A 395-amino-acid chain; its full sequence is Chalcone synthase (395 aa).

An N-acetylvaline modification is found at Val2. Val2 bears the N-acetylalanine mark. Residue Cys169 is part of the active site.

This sequence belongs to the thiolase-like superfamily. Chalcone/stilbene synthases family.

It carries out the reaction (E)-4-coumaroyl-CoA + 3 malonyl-CoA + 3 H(+) = 2',4,4',6'-tetrahydroxychalcone + 3 CO2 + 4 CoA. It participates in secondary metabolite biosynthesis; flavonoid biosynthesis. In terms of biological role, the primary product of this enzyme is 4,2',4',6'-tetrahydroxychalcone (also termed naringenin-chalcone or chalcone) which can under specific conditions spontaneously isomerize into naringenin. The chain is Chalcone synthase (CHS) from Arabidopsis thaliana (Mouse-ear cress).